Consider the following 170-residue polypeptide: MKDVYLYIVEKSVAWEFDSPEYGRLARKVAEMLYERKEDLTDDRIAILLNISTAETRRILQYLMRLNLVGVKKRTTEDYRIEYTWYVDDEIIKQAIGGRARTAREKISMLIRALTEGSYYICPNCHMRYSLDEAVNKGGVCPVCGAELEYVESLEEINKLTKVLQKLEKL.

The 93-residue stretch at 1-93 (MKDVYLYIVE…TWYVDDEIIK (93 aa)) folds into the HTH TFE/IIEalpha-type domain.

Belongs to the TFE family. In terms of assembly, monomer. Interaction with RNA polymerase subunits RpoF and RpoE is necessary for Tfe stimulatory transcription activity. Able to interact with Tbp and RNA polymerase in the absence of DNA promoter. Interacts both with the preinitiation and elongation complexes.

Functionally, transcription factor that plays a role in the activation of archaeal genes transcribed by RNA polymerase. Facilitates transcription initiation by enhancing TATA-box recognition by TATA-box-binding protein (Tbp), and transcription factor B (Tfb) and RNA polymerase recruitment. Not absolutely required for transcription in vitro, but particularly important in cases where Tbp or Tfb function is not optimal. It dynamically alters the nucleic acid-binding properties of RNA polymerases by stabilizing the initiation complex and destabilizing elongation complexes. Seems to translocate with the RNA polymerase following initiation and acts by binding to the non template strand of the transcription bubble in elongation complexes. This Pyrobaculum aerophilum (strain ATCC 51768 / DSM 7523 / JCM 9630 / CIP 104966 / NBRC 100827 / IM2) protein is Transcription factor E.